Reading from the N-terminus, the 597-residue chain is DNA primase (597 aa).

Residues Cys40, His43, Cys61, and Cys64 each coordinate Zn(2+). The segment at 40 to 64 (CPFHGEKTPSFSVSPEKQIFHCFGC) adopts a CHC2-type zinc-finger fold. Positions 262 to 342 (QEALLVEGFA…RVKVASLPNG (81 aa)) constitute a Toprim domain. The Mg(2+) site is built by Glu268, Asp311, and Asp313. Over residues 429–447 (LSRSQRERTKPREAPDGET) the composition is skewed to basic and acidic residues. The interval 429-448 (LSRSQRERTKPREAPDGETA) is disordered.

It belongs to the DnaG primase family. In terms of assembly, monomer. Interacts with replicative helicase DnaB, as DnaB(6):DnaG(3). A stable complex DnaI(6):DnaB(6):DnaG(3) fragment can be isolated; DnaI and DnaG do not contact each other (DnaI in this complex is derived from B.subtilis). The cofactor is Zn(2+). Mg(2+) serves as cofactor.

It carries out the reaction ssDNA + n NTP = ssDNA/pppN(pN)n-1 hybrid + (n-1) diphosphate.. Its function is as follows. RNA polymerase that catalyzes the synthesis of short RNA molecules used as primers for DNA polymerase during DNA replication. The polypeptide is DNA primase (Geobacillus stearothermophilus (Bacillus stearothermophilus)).